Reading from the N-terminus, the 77-residue chain is Putative neurotoxin 1 (77 aa).

The N-terminal stretch at 1–25 (MKAFIAILSIAIVLLLIVSIKETSA) is a signal peptide. Positions 26–46 (KDCKQECVKRYTKGDLTNFLK) are excised as a propeptide.

It belongs to the scolopendra neurotoxin 3 family. Contains 2 disulfide bonds. As to expression, expressed by the venom gland.

The protein resides in the secreted. The chain is Putative neurotoxin 1 from Scolopendra mutilans (Chinese red-headed centipede).